Reading from the N-terminus, the 145-residue chain is 3-dehydroquinate dehydratase (145 aa).

The active-site Proton acceptor is Tyr-23. Substrate is bound by residues Asn-74, His-80, and Asp-87. The active-site Proton donor is the His-100. Residues 101–102 (IS) and Arg-111 contribute to the substrate site.

Belongs to the type-II 3-dehydroquinase family. As to quaternary structure, homododecamer.

The catalysed reaction is 3-dehydroquinate = 3-dehydroshikimate + H2O. The protein operates within metabolic intermediate biosynthesis; chorismate biosynthesis; chorismate from D-erythrose 4-phosphate and phosphoenolpyruvate: step 3/7. Its function is as follows. Catalyzes a trans-dehydration via an enolate intermediate. In Mycobacterium leprae (strain Br4923), this protein is 3-dehydroquinate dehydratase.